The primary structure comprises 249 residues: Pyridoxine 5'-phosphate synthase (249 aa).

Asn-7 is a binding site for 3-amino-2-oxopropyl phosphate. 9–10 (DH) provides a ligand contact to 1-deoxy-D-xylulose 5-phosphate. Arg-18 serves as a coordination point for 3-amino-2-oxopropyl phosphate. His-43 functions as the Proton acceptor in the catalytic mechanism. Residues Arg-45 and His-50 each coordinate 1-deoxy-D-xylulose 5-phosphate. Glu-70 functions as the Proton acceptor in the catalytic mechanism. A 1-deoxy-D-xylulose 5-phosphate-binding site is contributed by Thr-100. His-198 acts as the Proton donor in catalysis. 3-amino-2-oxopropyl phosphate contacts are provided by residues Ala-199 and 220 to 221 (GH).

Belongs to the PNP synthase family. Homooctamer; tetramer of dimers.

It is found in the cytoplasm. The enzyme catalyses 3-amino-2-oxopropyl phosphate + 1-deoxy-D-xylulose 5-phosphate = pyridoxine 5'-phosphate + phosphate + 2 H2O + H(+). The protein operates within cofactor biosynthesis; pyridoxine 5'-phosphate biosynthesis; pyridoxine 5'-phosphate from D-erythrose 4-phosphate: step 5/5. Functionally, catalyzes the complicated ring closure reaction between the two acyclic compounds 1-deoxy-D-xylulose-5-phosphate (DXP) and 3-amino-2-oxopropyl phosphate (1-amino-acetone-3-phosphate or AAP) to form pyridoxine 5'-phosphate (PNP) and inorganic phosphate. This is Pyridoxine 5'-phosphate synthase from Azoarcus sp. (strain BH72).